Reading from the N-terminus, the 305-residue chain is Fructose-bisphosphate aldolase (305 aa).

Ser-49 is a D-glyceraldehyde 3-phosphate binding site. Asp-80 serves as the catalytic Proton donor. The Zn(2+) site is built by His-81, Asp-102, Glu-132, and His-178. Gly-179 is a dihydroxyacetone phosphate binding site. His-208 serves as a coordination point for Zn(2+). Dihydroxyacetone phosphate contacts are provided by residues 209–211 (GAS) and 251–254 (NTDT).

This sequence belongs to the class II fructose-bisphosphate aldolase family. In terms of assembly, homotetramer. Zn(2+) serves as cofactor.

It catalyses the reaction beta-D-fructose 1,6-bisphosphate = D-glyceraldehyde 3-phosphate + dihydroxyacetone phosphate. It functions in the pathway carbohydrate degradation; glycolysis; D-glyceraldehyde 3-phosphate and glycerone phosphate from D-glucose: step 4/4. Functionally, catalyzes the aldol condensation of dihydroxyacetone phosphate (DHAP or glycerone-phosphate) with glyceraldehyde 3-phosphate (G3P) to form fructose 1,6-bisphosphate (FBP) in gluconeogenesis and the reverse reaction in glycolysis. This is Fructose-bisphosphate aldolase from Thermus caldophilus.